The chain runs to 236 residues: MAATLLDVCAVVPAAGFGRRMQTECPKQYLSIGNKTILEHSVHALLAHPRVTRVVIVISPGDHRFAQLPLANHPQITVVDGGNERADSVMAGLQAVAQAKWVLVHDAARPCLHQDDLARLLAISENSRVGGILASPVRDTMKRGEPGKAAIAHTVERADLWHALTPQFFPRELLHDCLTRALKEGATITDEASALEYCGFHPALVEGRADNIKVTRPEDLALAEFYLTRTIHQEKA.

The protein belongs to the IspD/TarI cytidylyltransferase family. IspD subfamily. In terms of assembly, homodimer.

It catalyses the reaction 2-C-methyl-D-erythritol 4-phosphate + CTP + H(+) = 4-CDP-2-C-methyl-D-erythritol + diphosphate. Its pathway is isoprenoid biosynthesis; isopentenyl diphosphate biosynthesis via DXP pathway; isopentenyl diphosphate from 1-deoxy-D-xylulose 5-phosphate: step 2/6. Functionally, catalyzes the formation of 4-diphosphocytidyl-2-C-methyl-D-erythritol from CTP and 2-C-methyl-D-erythritol 4-phosphate (MEP). This is 2-C-methyl-D-erythritol 4-phosphate cytidylyltransferase from Salmonella arizonae (strain ATCC BAA-731 / CDC346-86 / RSK2980).